The following is a 291-amino-acid chain: BTB/POZ domain-containing protein 19 (291 aa).

The 70-residue stretch at 29–98 folds into the BTB domain; that stretch reads SDVRFVVGQE…LYTNSAKLQR (70 aa). Positions 134–234 constitute a BACK domain; sequence CEALQVAVTF…LALLAPAELS (101 aa).

In Bos taurus (Bovine), this protein is BTB/POZ domain-containing protein 19 (BTBD19).